A 201-amino-acid chain; its full sequence is ATP-dependent Clp protease proteolytic subunit (201 aa).

S98 acts as the Nucleophile in catalysis. H123 is an active-site residue.

The protein belongs to the peptidase S14 family. Fourteen ClpP subunits assemble into 2 heptameric rings which stack back to back to give a disk-like structure with a central cavity, resembling the structure of eukaryotic proteasomes.

The protein localises to the cytoplasm. It carries out the reaction Hydrolysis of proteins to small peptides in the presence of ATP and magnesium. alpha-casein is the usual test substrate. In the absence of ATP, only oligopeptides shorter than five residues are hydrolyzed (such as succinyl-Leu-Tyr-|-NHMec, and Leu-Tyr-Leu-|-Tyr-Trp, in which cleavage of the -Tyr-|-Leu- and -Tyr-|-Trp bonds also occurs).. Functionally, cleaves peptides in various proteins in a process that requires ATP hydrolysis. Has a chymotrypsin-like activity. Plays a major role in the degradation of misfolded proteins. This Rickettsia felis (strain ATCC VR-1525 / URRWXCal2) (Rickettsia azadi) protein is ATP-dependent Clp protease proteolytic subunit.